Consider the following 264-residue polypeptide: Meiotically up-regulated gene 162 protein (264 aa).

The next 7 membrane-spanning stretches (helical) occupy residues 18-38 (IVIF…WNLK), 54-74 (LWIY…AGSA), 84-104 (VFQV…GYSF), 140-160 (IISI…LLFL), 174-194 (HLSY…IKLI), 199-219 (FVLG…SLIT), and 223-243 (LISY…IWIY).

The protein resides in the endoplasmic reticulum membrane. Functionally, has a role in meiosis. The sequence is that of Meiotically up-regulated gene 162 protein (mug162) from Schizosaccharomyces pombe (strain 972 / ATCC 24843) (Fission yeast).